The sequence spans 111 residues: Prostatic steroid-binding protein C1 (111 aa).

A signal peptide spans 1–23; sequence MSTIKLSLCLLIMLAVCCYEANA.

It belongs to the secretoglobin family. Lipophilin subfamily. Prostatein is composed of three different peptides called C1, C2 and C3. These form covalent C1:C3 (F) and C2:C3 (S) heterodimers whose noncovalent association forms tetrameric (C1:C3/C3:C2) prostatein molecules.

It localises to the secreted. Part of prostatein which is the major secretory glycoprotein of ventral prostate gland. The polypeptide is Prostatic steroid-binding protein C1 (Psbpc1) (Rattus norvegicus (Rat)).